We begin with the raw amino-acid sequence, 220 residues long: Thiopurine S-methyltransferase (220 aa).

S-adenosyl-L-methionine contacts are provided by Trp10, Leu45, Glu66, and Arg123.

Belongs to the class I-like SAM-binding methyltransferase superfamily. TPMT family.

It localises to the cytoplasm. The enzyme catalyses S-adenosyl-L-methionine + a thiopurine = S-adenosyl-L-homocysteine + a thiopurine S-methylether.. The chain is Thiopurine S-methyltransferase from Pseudomonas syringae pv. tomato (strain ATCC BAA-871 / DC3000).